A 269-amino-acid chain; its full sequence is uncharacterized protein (269 aa).

Residues Met1–His12 show a composition bias toward basic residues. Residues Met1 to Val82 form a disordered region. Residues Pro21–Leu33 show a composition bias toward acidic residues. A compositionally biased stretch (basic and acidic residues) spans Glu34–Asn63.

This is an uncharacterized protein from Dictyostelium discoideum (Social amoeba).